A 114-amino-acid chain; its full sequence is MSAFGLLILGLLTAVPPASCRQGLGNLQPWMQGLIAVAVFLVLVAIAFAVNHFWCQEEPEPAHMILTIGNKADGVLVGTDGRYSSVAASFRSSEHENAYENVPEEEGKVRSTPM.

At 1-28 the chain is on the extracellular side; it reads MSAFGLLILGLLTAVPPASCRQGLGNLQ. Residues 29-51 traverse the membrane as a helical segment; that stretch reads PWMQGLIAVAVFLVLVAIAFAVN. Topologically, residues 52–114 are cytoplasmic; it reads HFWCQEEPEP…EEGKVRSTPM (63 aa). Residue Ser85 is modified to Phosphoserine. The interval 95-114 is disordered; the sequence is HENAYENVPEEEGKVRSTPM. The span at 105–114 shows a compositional bias: basic and acidic residues; that stretch reads EEGKVRSTPM.

It belongs to the PDZK1-interacting protein 1/SMIM24 family. In terms of assembly, forms a heterodimer (via N-terminal transmembrane helix) with SLC5A2/SGLT2 (via TM13); this interaction enhances SLC5A2 transporter activity. Interacts with PDZK1.

It is found in the apical cell membrane. In terms of biological role, auxiliary protein of electrogenic Na(+)-coupled sugar symporter SLC5A2/SGLT2 and SLC5A1/SGLT1. Essential for the transporter activity of SLC5A2/SGLT2 but not SLC5A1/SGLT1. The polypeptide is PDZK1-interacting protein 1 (Pongo abelii (Sumatran orangutan)).